Consider the following 400-residue polypeptide: Probable glucan endo-1,6-beta-glucosidase B (400 aa).

The signal sequence occupies residues M1–A17. N30 carries N-linked (GlcNAc...) asparagine glycosylation. Catalysis depends on E219, which acts as the Proton donor. N272 carries an N-linked (GlcNAc...) asparagine glycan. Catalysis depends on E320, which acts as the Nucleophile.

Belongs to the glycosyl hydrolase 5 (cellulase A) family.

The protein resides in the secreted. The catalysed reaction is Random hydrolysis of (1-&gt;6)-linkages in (1-&gt;6)-beta-D-glucans.. In terms of biological role, beta-glucanases participate in the metabolism of beta-glucan, the main structural component of the cell wall. Acts on lutean, pustulan and 1,6-oligo-beta-D-glucosides. This is Probable glucan endo-1,6-beta-glucosidase B (exgB) from Neosartorya fischeri (strain ATCC 1020 / DSM 3700 / CBS 544.65 / FGSC A1164 / JCM 1740 / NRRL 181 / WB 181) (Aspergillus fischerianus).